Reading from the N-terminus, the 355-residue chain is Probable butyrate kinase (355 aa).

Belongs to the acetokinase family.

It is found in the cytoplasm. The enzyme catalyses butanoate + ATP = butanoyl phosphate + ADP. This Listeria welshimeri serovar 6b (strain ATCC 35897 / DSM 20650 / CCUG 15529 / CIP 8149 / NCTC 11857 / SLCC 5334 / V8) protein is Probable butyrate kinase.